The sequence spans 430 residues: Methylenetetrahydrofolate--tRNA-(uracil-5-)-methyltransferase TrmFO (430 aa).

Residue 9–14 coordinates FAD; that stretch reads GAGLAG.

Belongs to the MnmG family. TrmFO subfamily. FAD serves as cofactor.

The protein localises to the cytoplasm. The catalysed reaction is uridine(54) in tRNA + (6R)-5,10-methylene-5,6,7,8-tetrahydrofolate + NADH + H(+) = 5-methyluridine(54) in tRNA + (6S)-5,6,7,8-tetrahydrofolate + NAD(+). It catalyses the reaction uridine(54) in tRNA + (6R)-5,10-methylene-5,6,7,8-tetrahydrofolate + NADPH + H(+) = 5-methyluridine(54) in tRNA + (6S)-5,6,7,8-tetrahydrofolate + NADP(+). Functionally, catalyzes the folate-dependent formation of 5-methyl-uridine at position 54 (M-5-U54) in all tRNAs. The sequence is that of Methylenetetrahydrofolate--tRNA-(uracil-5-)-methyltransferase TrmFO from Fervidobacterium nodosum (strain ATCC 35602 / DSM 5306 / Rt17-B1).